Reading from the N-terminus, the 103-residue chain is Small ribosomal subunit protein uS10 (103 aa).

This sequence belongs to the universal ribosomal protein uS10 family. As to quaternary structure, part of the 30S ribosomal subunit.

Its function is as follows. Involved in the binding of tRNA to the ribosomes. The chain is Small ribosomal subunit protein uS10 from Aromatoleum aromaticum (strain DSM 19018 / LMG 30748 / EbN1) (Azoarcus sp. (strain EbN1)).